Reading from the N-terminus, the 217-residue chain is UPF0502 protein VF_A0604 (217 aa).

Belongs to the UPF0502 family.

This chain is UPF0502 protein VF_A0604, found in Aliivibrio fischeri (strain ATCC 700601 / ES114) (Vibrio fischeri).